The primary structure comprises 134 residues: ATP synthase epsilon chain, chloroplastic (134 aa).

The protein belongs to the ATPase epsilon chain family. In terms of assembly, F-type ATPases have 2 components, CF(1) - the catalytic core - and CF(0) - the membrane proton channel. CF(1) has five subunits: alpha(3), beta(3), gamma(1), delta(1), epsilon(1). CF(0) has three main subunits: a, b and c.

It is found in the plastid. The protein localises to the chloroplast thylakoid membrane. In terms of biological role, produces ATP from ADP in the presence of a proton gradient across the membrane. This Amborella trichopoda protein is ATP synthase epsilon chain, chloroplastic.